The sequence spans 345 residues: Ninja-family protein AFP1 (345 aa).

2 disordered regions span residues 114-185 (TSLP…ATAN) and 201-256 (QVSG…RRLS). Composition is skewed to basic and acidic residues over residues 123 to 132 (EWRKRKEMQT) and 222 to 232 (LETKASSDEAR). Positions 235 to 249 (PSTTQPQQETTTKPT) are enriched in low complexity.

It belongs to the Ninja family. Forms a heterodimer with AFP2. Interacts with ABI5/DPBF1, DPBF2, AREB3/DPBF3, ABF1, ABF3/DPBF5 and ABF4/AREB2.

It is found in the nucleus. Functionally, acts as a negative regulator of abscisic acid (ABA) response during germination through the ubiquitin-mediated proteolysis of ABI5/DPBF1. The polypeptide is Ninja-family protein AFP1 (AFP1) (Arabidopsis thaliana (Mouse-ear cress)).